A 327-amino-acid chain; its full sequence is Beta-ketoacyl-[acyl-carrier-protein] synthase III (327 aa).

Catalysis depends on residues cysteine 112 and histidine 253. Residues 254-258 form an ACP-binding region; sequence QANER. Asparagine 283 is a catalytic residue.

Belongs to the thiolase-like superfamily. FabH family. In terms of assembly, homodimer.

It localises to the cytoplasm. It catalyses the reaction malonyl-[ACP] + acetyl-CoA + H(+) = 3-oxobutanoyl-[ACP] + CO2 + CoA. It participates in lipid metabolism; fatty acid biosynthesis. Its function is as follows. Catalyzes the condensation reaction of fatty acid synthesis by the addition to an acyl acceptor of two carbons from malonyl-ACP. Catalyzes the first condensation reaction which initiates fatty acid synthesis and may therefore play a role in governing the total rate of fatty acid production. Possesses both acetoacetyl-ACP synthase and acetyl transacylase activities. Its substrate specificity determines the biosynthesis of branched-chain and/or straight-chain of fatty acids. This chain is Beta-ketoacyl-[acyl-carrier-protein] synthase III, found in Chlamydia trachomatis serovar A (strain ATCC VR-571B / DSM 19440 / HAR-13).